Reading from the N-terminus, the 357-residue chain is Probable dual-specificity RNA methyltransferase RlmN (357 aa).

Catalysis depends on Glu95, which acts as the Proton acceptor. In terms of domain architecture, Radical SAM core spans Asn106–Asp340. An intrachain disulfide couples Cys113 to Cys345. Residues Cys120, Cys124, and Cys127 each coordinate [4Fe-4S] cluster. S-adenosyl-L-methionine is bound by residues Gly172 to Glu173, Ser204, Ser227 to His229, and Asn302. Cys345 (S-methylcysteine intermediate) is an active-site residue.

This sequence belongs to the radical SAM superfamily. RlmN family. Requires [4Fe-4S] cluster as cofactor.

The protein resides in the cytoplasm. The catalysed reaction is adenosine(2503) in 23S rRNA + 2 reduced [2Fe-2S]-[ferredoxin] + 2 S-adenosyl-L-methionine = 2-methyladenosine(2503) in 23S rRNA + 5'-deoxyadenosine + L-methionine + 2 oxidized [2Fe-2S]-[ferredoxin] + S-adenosyl-L-homocysteine. It carries out the reaction adenosine(37) in tRNA + 2 reduced [2Fe-2S]-[ferredoxin] + 2 S-adenosyl-L-methionine = 2-methyladenosine(37) in tRNA + 5'-deoxyadenosine + L-methionine + 2 oxidized [2Fe-2S]-[ferredoxin] + S-adenosyl-L-homocysteine. Its function is as follows. Specifically methylates position 2 of adenine 2503 in 23S rRNA and position 2 of adenine 37 in tRNAs. The chain is Probable dual-specificity RNA methyltransferase RlmN from Desulfitobacterium hafniense (strain DSM 10664 / DCB-2).